A 373-amino-acid chain; its full sequence is D-alanine--D-alanine ligase (373 aa).

In terms of domain architecture, ATP-grasp spans 156 to 363 (KKLLAAEGLP…YPTLLAAMVD (208 aa)). 184 to 239 (RERLGLPVFVKPARGGSSIGVSRVTAWDELPAAVALARRHDPKVIVEAAVIGRELE) contacts ATP. Positions 318, 330, and 332 each coordinate Mg(2+).

It belongs to the D-alanine--D-alanine ligase family. The cofactor is Mg(2+). Mn(2+) serves as cofactor.

It localises to the cytoplasm. The catalysed reaction is 2 D-alanine + ATP = D-alanyl-D-alanine + ADP + phosphate + H(+). Its pathway is cell wall biogenesis; peptidoglycan biosynthesis. In terms of biological role, cell wall formation. The protein is D-alanine--D-alanine ligase of Mycolicibacterium smegmatis (strain ATCC 700084 / mc(2)155) (Mycobacterium smegmatis).